The following is a 320-amino-acid chain: MSEEDISLPIIDLSGYLSPKSPDDRQNVIEQIRDACRDFGFFQLKGHGIPISLQKELLKSLGTLFSMPKEEKMKLSYLENPCRRGYEASGMSMREGDAMPDSKEAYYLGREDPVVEFSGFYGPNVWPNLPEEDFRGPVWEYYQKTSQLGKTIWEVLLQGLGYSTDLMEAFAKRPLVQMKLIRYPSPSVTLPGQFGVGAHNDFGGVTVLLQQAGKDGLEVWLEKQQKWLSVPALEDVYVINCGDMIMKWSGGRYKSVRHRVINKTEGERHSCATFWHGDVFATNPLNPEDPNKETVGQLLVKRFRHQMSIHKEGLAQVGEL.

Positions 174 to 278 (PLVQMKLIRY…HSCATFWHGD (105 aa)) constitute a Fe2OG dioxygenase domain. Fe cation-binding residues include His-199, Asp-201, and His-258. Position 268 (Arg-268) interacts with 2-oxoglutarate.

It belongs to the iron/ascorbate-dependent oxidoreductase family. Fe(2+) serves as cofactor.

The enzyme catalyses trihazone A + 2-oxoglutarate + O2 + H(+) = trihazone D + succinate + 2 CO2 + H2O. It functions in the pathway secondary metabolite biosynthesis. Functionally, 2-oxoglutarate-dependent dioxygenase; part of the gene cluster that produces the tetronate natural products trihazones. ThnC catalyzes the oxidative decarboxylation of trihazone A to trihazone D. The C4 hydrogen is first abstracted by the iron-oxo species generated in ThnC to give a tertiary radical at C4. This is followed by decarboxylation and removal of the second electron by the FeIII-OH center to give trihazone D. The pathway begins with the formation of trihazone A by the hybrid PKS-NRPS synthetase thnA and the trans-enoyl reductase thnE. Trihazone A is further decarboxylated by the 2-oxoglutarate-dependent dioxygenase thnC to produce trihazone D. The function of the FAD-dependent monooxygenase thnD has still to be identified. This is 2-oxoglutarate-dependent dioxygenase thnC from Trichoderma harzianum (Hypocrea lixii).